The sequence spans 185 residues: Ribosome-recycling factor (185 aa).

It belongs to the RRF family.

Its subcellular location is the cytoplasm. In terms of biological role, responsible for the release of ribosomes from messenger RNA at the termination of protein biosynthesis. May increase the efficiency of translation by recycling ribosomes from one round of translation to another. The sequence is that of Ribosome-recycling factor from Frankia alni (strain DSM 45986 / CECT 9034 / ACN14a).